Consider the following 678-residue polypeptide: DNA ligase (678 aa).

NAD(+) is bound by residues 36 to 40 (DVVYD), 85 to 86 (SL), and Glu-117. The N6-AMP-lysine intermediate role is filled by Lys-119. Arg-140, Glu-177, Lys-294, and Lys-318 together coordinate NAD(+). Residues Cys-412, Cys-415, Cys-430, and Cys-435 each contribute to the Zn(2+) site. The region spanning 598 to 678 (ISSTPLAGKT…QLLKMINPQE (81 aa)) is the BRCT domain.

The protein belongs to the NAD-dependent DNA ligase family. LigA subfamily. The cofactor is Mg(2+). Mn(2+) serves as cofactor.

The catalysed reaction is NAD(+) + (deoxyribonucleotide)n-3'-hydroxyl + 5'-phospho-(deoxyribonucleotide)m = (deoxyribonucleotide)n+m + AMP + beta-nicotinamide D-nucleotide.. Its function is as follows. DNA ligase that catalyzes the formation of phosphodiester linkages between 5'-phosphoryl and 3'-hydroxyl groups in double-stranded DNA using NAD as a coenzyme and as the energy source for the reaction. It is essential for DNA replication and repair of damaged DNA. The polypeptide is DNA ligase (Gloeothece citriformis (strain PCC 7424) (Cyanothece sp. (strain PCC 7424))).